Here is a 256-residue protein sequence, read N- to C-terminus: uncharacterized protein (256 aa).

The segment at 211-256 (RKLQASVTTTPPKRCKLADRPAQTTQDTPRAPQPAPVRAQRPLFTL) is disordered. A compositionally biased stretch (low complexity) spans 246–256 (PVRAQRPLFTL).

This is an uncharacterized protein from Orgyia pseudotsugata (Douglas-fir tussock moth).